Here is a 246-residue protein sequence, read N- to C-terminus: tRNA (guanine-N(1)-)-methyltransferase (246 aa).

Residues Gly-114 and 133–138 each bind S-adenosyl-L-methionine; that span reads LGDYVL.

This sequence belongs to the RNA methyltransferase TrmD family. As to quaternary structure, homodimer.

The protein resides in the cytoplasm. The catalysed reaction is guanosine(37) in tRNA + S-adenosyl-L-methionine = N(1)-methylguanosine(37) in tRNA + S-adenosyl-L-homocysteine + H(+). In terms of biological role, specifically methylates guanosine-37 in various tRNAs. This is tRNA (guanine-N(1)-)-methyltransferase from Enterococcus faecalis (strain ATCC 700802 / V583).